Reading from the N-terminus, the 60-residue chain is Large ribosomal subunit protein bL32 (60 aa).

The tract at residues 1–44 (MAVQQNKKSRSARDMRRSHDALEASTLSVEKTTGEVHLRHHVSP) is disordered. A compositionally biased stretch (basic and acidic residues) spans 11–22 (SARDMRRSHDAL).

Belongs to the bacterial ribosomal protein bL32 family.

This Pseudomonas fluorescens (strain SBW25) protein is Large ribosomal subunit protein bL32.